A 216-amino-acid polypeptide reads, in one-letter code: Uracil phosphoribosyltransferase (216 aa).

Residues Arg-85, Arg-110, and Asp-135–Ser-143 each bind 5-phospho-alpha-D-ribose 1-diphosphate. Residues Ile-200 and Gly-205–Ala-207 each bind uracil. Asp-206 is a binding site for 5-phospho-alpha-D-ribose 1-diphosphate.

The protein belongs to the UPRTase family. It depends on Mg(2+) as a cofactor.

The catalysed reaction is UMP + diphosphate = 5-phospho-alpha-D-ribose 1-diphosphate + uracil. The protein operates within pyrimidine metabolism; UMP biosynthesis via salvage pathway; UMP from uracil: step 1/1. Its activity is regulated as follows. Allosterically activated by GTP. In terms of biological role, catalyzes the conversion of uracil and 5-phospho-alpha-D-ribose 1-diphosphate (PRPP) to UMP and diphosphate. The sequence is that of Uracil phosphoribosyltransferase from Burkholderia thailandensis (strain ATCC 700388 / DSM 13276 / CCUG 48851 / CIP 106301 / E264).